A 100-amino-acid chain; its full sequence is Urease subunit gamma (100 aa).

It belongs to the urease gamma subunit family. Heterotrimer of UreA (gamma), UreB (beta) and UreC (alpha) subunits. Three heterotrimers associate to form the active enzyme.

Its subcellular location is the cytoplasm. It catalyses the reaction urea + 2 H2O + H(+) = hydrogencarbonate + 2 NH4(+). It functions in the pathway nitrogen metabolism; urea degradation; CO(2) and NH(3) from urea (urease route): step 1/1. The protein is Urease subunit gamma of Magnetococcus marinus (strain ATCC BAA-1437 / JCM 17883 / MC-1).